The following is a 983-amino-acid chain: Glycine dehydrogenase (decarboxylating) (983 aa).

K731 is subject to N6-(pyridoxal phosphate)lysine.

Belongs to the GcvP family. As to quaternary structure, the glycine cleavage system is composed of four proteins: P, T, L and H. Requires pyridoxal 5'-phosphate as cofactor.

The enzyme catalyses N(6)-[(R)-lipoyl]-L-lysyl-[glycine-cleavage complex H protein] + glycine + H(+) = N(6)-[(R)-S(8)-aminomethyldihydrolipoyl]-L-lysyl-[glycine-cleavage complex H protein] + CO2. Its function is as follows. The glycine cleavage system catalyzes the degradation of glycine. The P protein binds the alpha-amino group of glycine through its pyridoxal phosphate cofactor; CO(2) is released and the remaining methylamine moiety is then transferred to the lipoamide cofactor of the H protein. The polypeptide is Glycine dehydrogenase (decarboxylating) (Nostoc sp. (strain PCC 7120 / SAG 25.82 / UTEX 2576)).